Consider the following 189-residue polypeptide: Molybdopterin synthase catalytic subunit (189 aa).

Polar residues predominate over residues 1 to 30; it reads MSSLEISNSCFSPETRSPSSRQSVEDNASE. Residues 1–41 form a disordered region; that stretch reads MSSLEISNSCFSPETRSPSSRQSVEDNASEPSGKDVDDVQE. A Phosphoserine modification is found at Ser-20. Residues 32 to 41 show a composition bias toward basic and acidic residues; it reads SGKDVDDVQE. Residues 143 to 144, Lys-159, and 166 to 168 each bind substrate; these read HR and KKE.

The protein belongs to the MoaE family. MOCS2B subfamily. As to quaternary structure, heterotetramer; composed of 2 small (MOCS2A) and 2 large (MOCS2B) subunits.

The protein resides in the cytoplasm. The protein localises to the cytosol. It carries out the reaction 2 [molybdopterin-synthase sulfur-carrier protein]-C-terminal-Gly-aminoethanethioate + cyclic pyranopterin phosphate + H2O = molybdopterin + 2 [molybdopterin-synthase sulfur-carrier protein]-C-terminal Gly-Gly + 2 H(+). Its pathway is cofactor biosynthesis; molybdopterin biosynthesis. Functionally, catalytic subunit of the molybdopterin synthase complex, a complex that catalyzes the conversion of precursor Z into molybdopterin. Acts by mediating the incorporation of 2 sulfur atoms from thiocarboxylated MOCS2A into precursor Z to generate a dithiolene group. The chain is Molybdopterin synthase catalytic subunit from Mus musculus (Mouse).